Reading from the N-terminus, the 106-residue chain is Large ribosomal subunit protein uL24 (106 aa).

This sequence belongs to the universal ribosomal protein uL24 family. In terms of assembly, part of the 50S ribosomal subunit.

Functionally, one of two assembly initiator proteins, it binds directly to the 5'-end of the 23S rRNA, where it nucleates assembly of the 50S subunit. In terms of biological role, one of the proteins that surrounds the polypeptide exit tunnel on the outside of the subunit. This Acidithiobacillus ferrooxidans (strain ATCC 53993 / BNL-5-31) (Leptospirillum ferrooxidans (ATCC 53993)) protein is Large ribosomal subunit protein uL24.